Reading from the N-terminus, the 271-residue chain is Formamidopyrimidine-DNA glycosylase (271 aa).

P2 serves as the catalytic Schiff-base intermediate with DNA. E3 (proton donor) is an active-site residue. The Proton donor; for beta-elimination activity role is filled by K58. Positions 91, 110, and 152 each coordinate DNA. The FPG-type zinc-finger motif lies at 237 to 271 (RAYGRGGQPCTVCQTELKEIKLGQRTSVFCPSCQR). The Proton donor; for delta-elimination activity role is filled by R261.

The protein belongs to the FPG family. In terms of assembly, monomer. It depends on Zn(2+) as a cofactor.

It carries out the reaction Hydrolysis of DNA containing ring-opened 7-methylguanine residues, releasing 2,6-diamino-4-hydroxy-5-(N-methyl)formamidopyrimidine.. It catalyses the reaction 2'-deoxyribonucleotide-(2'-deoxyribose 5'-phosphate)-2'-deoxyribonucleotide-DNA = a 3'-end 2'-deoxyribonucleotide-(2,3-dehydro-2,3-deoxyribose 5'-phosphate)-DNA + a 5'-end 5'-phospho-2'-deoxyribonucleoside-DNA + H(+). Functionally, involved in base excision repair of DNA damaged by oxidation or by mutagenic agents. Acts as a DNA glycosylase that recognizes and removes damaged bases. Has a preference for oxidized purines, such as 7,8-dihydro-8-oxoguanine (8-oxoG). Has AP (apurinic/apyrimidinic) lyase activity and introduces nicks in the DNA strand. Cleaves the DNA backbone by beta-delta elimination to generate a single-strand break at the site of the removed base with both 3'- and 5'-phosphates. This chain is Formamidopyrimidine-DNA glycosylase, found in Hahella chejuensis (strain KCTC 2396).